Consider the following 211-residue polypeptide: MAGEIPDLVAEPRAGTGKGAARQARRDGYVPGVVYGGGADPQPIQIKFNELLRRLKAGRFMATLFNLKVEGQEDVRVICRNVQRDVVKDLPTHLDLMRLRRTSKVNLFIPVEFINEGAAPGIKKGGVLTAVRPEVELRVTAGDIPESITVDLTGLDIGDTVTISSVTLPEGATPTIDRDFVIANIQAPSGLRSADNEADEEETEEATAEEV.

Disordered stretches follow at residues 1–23 and 191–211; these read MAGE…AARQ and LRSA…AEEV. Positions 196-211 are enriched in acidic residues; sequence NEADEEETEEATAEEV.

The protein belongs to the bacterial ribosomal protein bL25 family. CTC subfamily. As to quaternary structure, part of the 50S ribosomal subunit; part of the 5S rRNA/L5/L18/L25 subcomplex. Contacts the 5S rRNA. Binds to the 5S rRNA independently of L5 and L18.

In terms of biological role, this is one of the proteins that binds to the 5S RNA in the ribosome where it forms part of the central protuberance. This is Large ribosomal subunit protein bL25 from Dinoroseobacter shibae (strain DSM 16493 / NCIMB 14021 / DFL 12).